The primary structure comprises 1241 residues: ATP-dependent helicase/nuclease subunit A (1241 aa).

A UvrD-like helicase ATP-binding domain is found at 12 to 485 (SQWTDDQWKA…IDLAKNFRSR (474 aa)). Position 33-40 (33-40 (AAAGSGKT)) interacts with ATP. Positions 505-805 (GEIDYDADAE…RIMTIHKSKG (301 aa)) constitute a UvrD-like helicase C-terminal domain.

The protein belongs to the helicase family. AddA subfamily. Heterodimer of AddA and AddB/RexB. Requires Mg(2+) as cofactor.

The catalysed reaction is Couples ATP hydrolysis with the unwinding of duplex DNA by translocating in the 3'-5' direction.. The enzyme catalyses ATP + H2O = ADP + phosphate + H(+). Functionally, the heterodimer acts as both an ATP-dependent DNA helicase and an ATP-dependent, dual-direction single-stranded exonuclease. Recognizes the chi site generating a DNA molecule suitable for the initiation of homologous recombination. The AddA nuclease domain is required for chi fragment generation; this subunit has the helicase and 3' -&gt; 5' nuclease activities. The protein is ATP-dependent helicase/nuclease subunit A of Bacillus thuringiensis subsp. konkukian (strain 97-27).